An 88-amino-acid chain; its full sequence is Putative septation protein SpoVG (88 aa).

The protein belongs to the SpoVG family.

Its function is as follows. Could be involved in septation. The sequence is that of Putative septation protein SpoVG from Lachnospira eligens (strain ATCC 27750 / DSM 3376 / VPI C15-48 / C15-B4) (Eubacterium eligens).